A 539-amino-acid polypeptide reads, in one-letter code: Acid-sensing ion channel 4-A (539 aa).

Residues 1–68 (MPIEFVCKIK…SGRLGVRQTL (68 aa)) are Cytoplasmic-facing. A helical membrane pass occupies residues 69 to 89 (WALAFLVSLALFLYQAAKCAI). Over 90–432 (SYLEHPHVTA…EQKKAYDVAG (343 aa)) the chain is Extracellular. 2 disulfide bridges follow: Cys116/Cys200 and Cys178/Cys185. N-linked (GlcNAc...) asparagine glycans are attached at residues Asn136, Asn165, Asn179, Asn184, Asn206, and Asn241. 5 disulfide bridges follow: Cys294–Cys369, Cys313–Cys365, Cys317–Cys363, Cys326–Cys347, and Cys328–Cys340. Asn370 carries an N-linked (GlcNAc...) asparagine glycan. Residues 433-453 (LLGDIGGQMGLFIGASVLTIL) form a helical membrane-spanning segment. A GAS motif; ion selectivity filter motif is present at residues 446 to 448 (GAS). Topologically, residues 454 to 539 (EILDYVYEVI…HHRVSEDFAC (86 aa)) are cytoplasmic. A disordered region spans residues 474 to 494 (QRDDKKQTQQQQQASTVATVN).

The protein belongs to the amiloride-sensitive sodium channel (TC 1.A.6) family. ASIC4 subfamily. As to quaternary structure, homotrimer. Heterotrimer; with other ASIC proteins producing functional channels. Expressed in central nervous system.

Its subcellular location is the cell membrane. It catalyses the reaction Na(+)(in) = Na(+)(out). Its activity is regulated as follows. Inhibited by the diuretic drug amiloride. In terms of biological role, could form pH-gated trimeric sodium channels and function as a postsynaptic excitatory receptors in the nervous system. This chain is Acid-sensing ion channel 4-A, found in Danio rerio (Zebrafish).